A 188-amino-acid polypeptide reads, in one-letter code: Elongation factor P (188 aa).

This sequence belongs to the elongation factor P family.

The protein localises to the cytoplasm. Its pathway is protein biosynthesis; polypeptide chain elongation. Functionally, involved in peptide bond synthesis. Stimulates efficient translation and peptide-bond synthesis on native or reconstituted 70S ribosomes in vitro. Probably functions indirectly by altering the affinity of the ribosome for aminoacyl-tRNA, thus increasing their reactivity as acceptors for peptidyl transferase. The sequence is that of Elongation factor P (efp) from Ureaplasma parvum serovar 3 (strain ATCC 700970).